The primary structure comprises 345 residues: N-acetyl-gamma-glutamyl-phosphate reductase (345 aa).

Cysteine 149 is an active-site residue.

Belongs to the NAGSA dehydrogenase family. Type 1 subfamily.

It localises to the cytoplasm. It catalyses the reaction N-acetyl-L-glutamate 5-semialdehyde + phosphate + NADP(+) = N-acetyl-L-glutamyl 5-phosphate + NADPH + H(+). Its pathway is amino-acid biosynthesis; L-arginine biosynthesis; N(2)-acetyl-L-ornithine from L-glutamate: step 3/4. Catalyzes the NADPH-dependent reduction of N-acetyl-5-glutamyl phosphate to yield N-acetyl-L-glutamate 5-semialdehyde. This Geobacillus stearothermophilus (Bacillus stearothermophilus) protein is N-acetyl-gamma-glutamyl-phosphate reductase.